The sequence spans 380 residues: Anhydro-N-acetylmuramic acid kinase (380 aa).

ATP is bound at residue 9–16 (GTSVDGID).

This sequence belongs to the anhydro-N-acetylmuramic acid kinase family.

The catalysed reaction is 1,6-anhydro-N-acetyl-beta-muramate + ATP + H2O = N-acetyl-D-muramate 6-phosphate + ADP + H(+). Its pathway is amino-sugar metabolism; 1,6-anhydro-N-acetylmuramate degradation. The protein operates within cell wall biogenesis; peptidoglycan recycling. Its function is as follows. Catalyzes the specific phosphorylation of 1,6-anhydro-N-acetylmuramic acid (anhMurNAc) with the simultaneous cleavage of the 1,6-anhydro ring, generating MurNAc-6-P. Is required for the utilization of anhMurNAc either imported from the medium or derived from its own cell wall murein, and thus plays a role in cell wall recycling. This Cyanothece sp. (strain PCC 7425 / ATCC 29141) protein is Anhydro-N-acetylmuramic acid kinase.